The primary structure comprises 670 residues: Probable urocanate hydratase (670 aa).

NAD(+)-binding positions include 126–127, Gln204, 250–252, Glu270, 316–317, 338–342, 349–350, Tyr398, and Gly590; these read GG, GMS, NV, QTSLH, and FY.

The protein belongs to the urocanase family. Requires NAD(+) as cofactor.

It catalyses the reaction 4-imidazolone-5-propanoate = trans-urocanate + H2O. It functions in the pathway amino-acid degradation; L-histidine degradation into L-glutamate; N-formimidoyl-L-glutamate from L-histidine: step 2/3. This chain is Probable urocanate hydratase, found in Caenorhabditis elegans.